The following is a 147-amino-acid chain: Hemoglobin subunit beta (147 aa).

A Globin domain is found at 3 to 147 (EWTDKERTII…VVSALGKQYH (145 aa)). Residues His-64 and His-93 each coordinate heme b.

This sequence belongs to the globin family. In terms of assembly, heterotetramer of two alpha chains and two beta chains. Red blood cells.

Functionally, involved in oxygen transport from gills to the various peripheral tissues. The chain is Hemoglobin subunit beta from Trematomus newnesi (Dusky notothen).